The following is a 73-amino-acid chain: uncharacterized protein (73 aa).

This is an uncharacterized protein from Saccharolobus islandicus (Sulfolobus islandicus).